A 189-amino-acid polypeptide reads, in one-letter code: Glycerol-3-phosphate acyltransferase 1 (189 aa).

5 helical membrane-spanning segments follow: residues 12 to 32 (MQFL…AYIV), 61 to 81 (GYFV…VSIA), 88 to 108 (FTFV…PMLF), 124 to 144 (IAFD…FYLI), and 164 to 184 (ILYS…VLIL).

The protein belongs to the PlsY family. Probably interacts with PlsX.

The protein localises to the cell membrane. It catalyses the reaction an acyl phosphate + sn-glycerol 3-phosphate = a 1-acyl-sn-glycero-3-phosphate + phosphate. The protein operates within lipid metabolism; phospholipid metabolism. Its function is as follows. Catalyzes the transfer of an acyl group from acyl-phosphate (acyl-PO(4)) to glycerol-3-phosphate (G3P) to form lysophosphatidic acid (LPA). This enzyme utilizes acyl-phosphate as fatty acyl donor, but not acyl-CoA or acyl-ACP. This is Glycerol-3-phosphate acyltransferase 1 from Bacillus anthracis.